The sequence spans 205 residues: Protein N-terminal glutamine amidohydrolase (205 aa).

Catalysis depends on residues C20, H74, and D90.

It belongs to the NTAQ1 family. In terms of assembly, monomer.

The enzyme catalyses N-terminal L-glutaminyl-[protein] + H2O = N-terminal L-glutamyl-[protein] + NH4(+). In terms of biological role, mediates the side-chain deamidation of N-terminal glutamine residues to glutamate, an important step in N-end rule pathway of protein degradation. Conversion of the resulting N-terminal glutamine to glutamate renders the protein susceptible to arginylation, polyubiquitination and degradation as specified by the N-end rule. Does not act on substrates with internal or C-terminal glutamine and does not act on non-glutamine residues in any position. This is Protein N-terminal glutamine amidohydrolase (tun) from Drosophila pseudoobscura pseudoobscura (Fruit fly).